We begin with the raw amino-acid sequence, 292 residues long: Elongation factor Ts (292 aa).

The involved in Mg(2+) ion dislocation from EF-Tu stretch occupies residues 79–82; it reads TDFV.

This sequence belongs to the EF-Ts family.

It localises to the cytoplasm. In terms of biological role, associates with the EF-Tu.GDP complex and induces the exchange of GDP to GTP. It remains bound to the aminoacyl-tRNA.EF-Tu.GTP complex up to the GTP hydrolysis stage on the ribosome. This chain is Elongation factor Ts (tsf), found in Idiomarina loihiensis (strain ATCC BAA-735 / DSM 15497 / L2-TR).